A 249-amino-acid polypeptide reads, in one-letter code: Sulfate transporter CysZ (249 aa).

Transmembrane regions (helical) follow at residues 26-46 (LFVL…IYFA), 71-91 (VIWP…FTML), 150-170 (LFIL…WLLF), and 206-226 (LGFG…ILMM).

It belongs to the CysZ family.

Its subcellular location is the cell inner membrane. Its function is as follows. High affinity, high specificity proton-dependent sulfate transporter, which mediates sulfate uptake. Provides the sulfur source for the cysteine synthesis pathway. This chain is Sulfate transporter CysZ, found in Pseudomonas fluorescens (strain ATCC BAA-477 / NRRL B-23932 / Pf-5).